Consider the following 426-residue polypeptide: Synaptotagmin-13 (426 aa).

At 1 to 6 the chain is on the vesicular side; sequence MVLSVP. The helical transmembrane segment at 7–29 threads the bilayer; the sequence is VIALGATLGTATSILALCGVTCL. Over 30-426 the chain is Cytoplasmic; it reads CRHMHPKKGL…QIAMWHQLHL (397 aa). C2 domains are found at residues 158-275 and 287-422; these read QAPK…AQWG and GTGE…AMWH.

It belongs to the synaptotagmin family. As to quaternary structure, interacts with NRXN1. As to expression, expressed in brain, spleen, kidney and testis.

It localises to the membrane. In terms of biological role, may be involved in transport vesicle docking to the plasma membrane. The sequence is that of Synaptotagmin-13 (Syt13) from Rattus norvegicus (Rat).